The primary structure comprises 477 residues: Peptidyl-prolyl cis-trans isomerase FKBP53 (477 aa).

2 disordered regions span residues 104 to 135 and 153 to 366; these read DYEH…EDEQ and AAAP…QVRT. Residues 264-274 are compositionally biased toward basic residues; that stretch reads KSKKKKNQKEK. Positions 299-321 are enriched in polar residues; sequence ISQISSNTKAQDGTANNAMSESS. The span at 322-331 shows a compositional bias: basic and acidic residues; sequence KTPDKSAEKK. Polar residues predominate over residues 351–366; that stretch reads VEKQTPADSKSSQVRT. One can recognise a PPIase FKBP-type domain in the interval 389–477; that stretch reads GKTVSVRYIG…TFDVELINVQ (89 aa).

This sequence belongs to the FKBP-type PPIase family. In terms of assembly, interacts with histone H3. As to expression, broadly expressed in leaves, flowers, stems and roots. Detected in root apical meristem region and pollen.

It is found in the nucleus. The catalysed reaction is [protein]-peptidylproline (omega=180) = [protein]-peptidylproline (omega=0). PPIases accelerate the folding of proteins. It catalyzes the cis-trans isomerization of proline imidic peptide bonds in oligopeptides. Histone chaperone possibly involved in H3/H4 deposition to the nucleosome. Associates with 18S rDNA chromatin and negatively regulates the level of its expression. This chain is Peptidyl-prolyl cis-trans isomerase FKBP53 (FKBP53), found in Arabidopsis thaliana (Mouse-ear cress).